Reading from the N-terminus, the 430-residue chain is Enolase (430 aa).

Glutamine 167 serves as a coordination point for (2R)-2-phosphoglycerate. Glutamate 209 functions as the Proton donor in the catalytic mechanism. Residues aspartate 246, glutamate 289, and aspartate 316 each coordinate Mg(2+). Residues lysine 341, arginine 370, serine 371, and lysine 392 each coordinate (2R)-2-phosphoglycerate. Catalysis depends on lysine 341, which acts as the Proton acceptor.

The protein belongs to the enolase family. In terms of assembly, component of the RNA degradosome, a multiprotein complex involved in RNA processing and mRNA degradation. Mg(2+) is required as a cofactor.

It is found in the cytoplasm. The protein localises to the secreted. It localises to the cell surface. The enzyme catalyses (2R)-2-phosphoglycerate = phosphoenolpyruvate + H2O. Its pathway is carbohydrate degradation; glycolysis; pyruvate from D-glyceraldehyde 3-phosphate: step 4/5. Catalyzes the reversible conversion of 2-phosphoglycerate (2-PG) into phosphoenolpyruvate (PEP). It is essential for the degradation of carbohydrates via glycolysis. The chain is Enolase from Alteromonas mediterranea (strain DSM 17117 / CIP 110805 / LMG 28347 / Deep ecotype).